The chain runs to 223 residues: Alpha-S2-casein (223 aa).

Positions Met1–Ala15 are cleaved as a signal peptide. Residues Ser23, Ser24, Ser25, Ser72, Ser73, Ser74, Ser77, Ser145, Ser147, Ser151, and Ser159 each carry the phosphoserine modification. The segment at residues Ser77 to Arg141 is a repeat. Residues Ser159–Leu223 constitute a repeat.

Belongs to the alpha-casein family. Mammary gland specific. Secreted in milk.

The protein resides in the secreted. Functionally, important role in the capacity of milk to transport calcium phosphate. The sequence is that of Alpha-S2-casein (CSN1S2) from Ovis aries (Sheep).